A 429-amino-acid polypeptide reads, in one-letter code: Fez family zinc finger protein 1 (429 aa).

Residues 29–44 (PLAFSIERIMARTPEP) carry the Engrailed homology 1 repressor motif. C2H2-type zinc fingers lie at residues 247–269 (FTCE…MPVH), 275–297 (FVCK…KIIH), 303–325 (HKCN…TRIH), 331–353 (FICE…KLTH), 359–381 (FKCN…MHTH), and 387–410 (FTCP…RKLH). A disordered region spans residues 409–429 (LHDISPGPHSPPTPTGNTEGQ).

This sequence belongs to the krueppel C2H2-type zinc-finger protein family.

It is found in the nucleus. Functionally, transcription repressor. Involved in the development of the forebrain region. The sequence is that of Fez family zinc finger protein 1 (fezf1) from Danio rerio (Zebrafish).